Here is a 753-residue protein sequence, read N- to C-terminus: 5-methyltetrahydropteroyltriglutamate--homocysteine methyltransferase (753 aa).

Residues 17-20 (RELK) and K117 contribute to the 5-methyltetrahydropteroyltri-L-glutamate site. Residues 431 to 433 (IGS) and E484 each bind L-homocysteine. L-methionine contacts are provided by residues 431–433 (IGS) and E484. 5-methyltetrahydropteroyltri-L-glutamate-binding positions include 515-516 (RC) and W561. D599 is a binding site for L-homocysteine. D599 contacts L-methionine. E605 lines the 5-methyltetrahydropteroyltri-L-glutamate pocket. The Zn(2+) site is built by H641, C643, and E665. The active-site Proton donor is the H694. C726 provides a ligand contact to Zn(2+).

The protein belongs to the vitamin-B12 independent methionine synthase family. Zn(2+) is required as a cofactor.

It catalyses the reaction 5-methyltetrahydropteroyltri-L-glutamate + L-homocysteine = tetrahydropteroyltri-L-glutamate + L-methionine. The protein operates within amino-acid biosynthesis; L-methionine biosynthesis via de novo pathway; L-methionine from L-homocysteine (MetE route): step 1/1. Catalyzes the transfer of a methyl group from 5-methyltetrahydrofolate to homocysteine resulting in methionine formation. In Klebsiella pneumoniae (strain 342), this protein is 5-methyltetrahydropteroyltriglutamate--homocysteine methyltransferase.